A 576-amino-acid polypeptide reads, in one-letter code: 2-isopropylmalate synthase (576 aa).

The 275-residue stretch at 31–305 folds into the Pyruvate carboxyltransferase domain; it reads PIWMSTDLRD…DPGLDFSHVN (275 aa). The Mg(2+) site is built by aspartate 40, histidine 244, histidine 246, and asparagine 280. The tract at residues 437–576 is regulatory domain; sequence ADGPIGYVSH…RGMAPSMELA (140 aa).

The protein belongs to the alpha-IPM synthase/homocitrate synthase family. LeuA type 2 subfamily. As to quaternary structure, homodimer. Mg(2+) serves as cofactor.

Its subcellular location is the cytoplasm. The enzyme catalyses 3-methyl-2-oxobutanoate + acetyl-CoA + H2O = (2S)-2-isopropylmalate + CoA + H(+). The protein operates within amino-acid biosynthesis; L-leucine biosynthesis; L-leucine from 3-methyl-2-oxobutanoate: step 1/4. Catalyzes the condensation of the acetyl group of acetyl-CoA with 3-methyl-2-oxobutanoate (2-ketoisovalerate) to form 3-carboxy-3-hydroxy-4-methylpentanoate (2-isopropylmalate). The chain is 2-isopropylmalate synthase from Ralstonia nicotianae (strain ATCC BAA-1114 / GMI1000) (Ralstonia solanacearum).